The sequence spans 257 residues: MSGKRLDGKIVIITGGASGIGAESVRLFTEHGARVVIVDVQDELGQNVAVSIGEDKASYYHCDVTNETEVENAVKFTVEKYGKLDVLFSNAGVIEPFVSILDLNLNELDRTIAINLRGTAAFIKHAARAMVEKGIRGSIVCTTSVAAEIAGTAPHGYTTSKHGLLGLIKSASGGLGKYGIRVNGVAPFGVATPLVCNGFKMEPNVVEQNTSASANLKGIVLKARHVAEAALFLASDESAYVSGQNLAVDGGYSVVKP.

Ile-12–Val-36 serves as a coordination point for NAD(+). Ser-144 provides a ligand contact to substrate. The active-site Proton acceptor is the Tyr-157.

The protein belongs to the short-chain dehydrogenases/reductases (SDR) family.

The protein is Short-chain dehydrogenase reductase 3b (SDR3b) of Arabidopsis thaliana (Mouse-ear cress).